The sequence spans 312 residues: Glyoxylate/hydroxypyruvate reductase A (312 aa).

Arg227 is an active-site residue. His275 serves as the catalytic Proton donor.

The protein belongs to the D-isomer specific 2-hydroxyacid dehydrogenase family. GhrA subfamily.

The protein resides in the cytoplasm. It catalyses the reaction glycolate + NADP(+) = glyoxylate + NADPH + H(+). It carries out the reaction (R)-glycerate + NAD(+) = 3-hydroxypyruvate + NADH + H(+). The catalysed reaction is (R)-glycerate + NADP(+) = 3-hydroxypyruvate + NADPH + H(+). In terms of biological role, catalyzes the NADPH-dependent reduction of glyoxylate and hydroxypyruvate into glycolate and glycerate, respectively. The polypeptide is Glyoxylate/hydroxypyruvate reductase A (Escherichia coli O157:H7).